Reading from the N-terminus, the 448-residue chain is Phosphoglucosamine mutase (448 aa).

Ser99 acts as the Phosphoserine intermediate in catalysis. 4 residues coordinate Mg(2+): Ser99, Asp239, Asp241, and Asp243. Residue Ser99 is modified to Phosphoserine.

Belongs to the phosphohexose mutase family. Mg(2+) serves as cofactor. In terms of processing, activated by phosphorylation.

The catalysed reaction is alpha-D-glucosamine 1-phosphate = D-glucosamine 6-phosphate. Catalyzes the conversion of glucosamine-6-phosphate to glucosamine-1-phosphate. This Lachnoclostridium phytofermentans (strain ATCC 700394 / DSM 18823 / ISDg) (Clostridium phytofermentans) protein is Phosphoglucosamine mutase.